We begin with the raw amino-acid sequence, 222 residues long: Orotate phosphoribosyltransferase (222 aa).

5-phospho-alpha-D-ribose 1-diphosphate is bound at residue K29. 37 to 38 (FF) is a binding site for orotate. 5-phospho-alpha-D-ribose 1-diphosphate-binding positions include 75–76 (YK), R101, K102, K105, H107, and 126–134 (DDVISAGTS). Orotate is bound by residues S130 and R158.

The protein belongs to the purine/pyrimidine phosphoribosyltransferase family. PyrE subfamily. As to quaternary structure, homodimer. The cofactor is Mg(2+).

It catalyses the reaction orotidine 5'-phosphate + diphosphate = orotate + 5-phospho-alpha-D-ribose 1-diphosphate. It functions in the pathway pyrimidine metabolism; UMP biosynthesis via de novo pathway; UMP from orotate: step 1/2. In terms of biological role, catalyzes the transfer of a ribosyl phosphate group from 5-phosphoribose 1-diphosphate to orotate, leading to the formation of orotidine monophosphate (OMP). The polypeptide is Orotate phosphoribosyltransferase (Polynucleobacter asymbioticus (strain DSM 18221 / CIP 109841 / QLW-P1DMWA-1) (Polynucleobacter necessarius subsp. asymbioticus)).